Here is a 171-residue protein sequence, read N- to C-terminus: MEEYAREPCPWRIVDDCGGAFTMGTIGGGIFQAFKGFRNSPVGVNHRLRGSLTAIKTRAPQLGGSFAVWGGLFSTIDCGMVQIRGKEDPWNSITSGALTGAILAARNGPVAMVGSAAMGGILLALIEGAGILLTRFASAQFPNGPQFAEDHSQLPSSQLPSSPFGDYRQYQ.

A disulfide bridge connects residues Cys-9 and Cys-78. 3 helical membrane passes run 17–37, 63–77, and 113–133; these read CGGAFTMGTIGGGIFQAFKGF, GGSFAVWGGLFSTID, and VGSAAMGGILLALIEGAGILL. The segment at 147–171 is disordered; that stretch reads FAEDHSQLPSSQLPSSPFGDYRQYQ. A compositionally biased stretch (low complexity) spans 153–163; that stretch reads QLPSSQLPSSP.

The protein belongs to the Tim17/Tim22/Tim23 family. In terms of assembly, component of the TIM23 complex at least composed of TIMM23, TIMM17 (TIMM17A or TIMM17B) and TIMM50. The complex interacts with the TIMM44 component of the PAM complex and with DNAJC15. Post-translationally, degraded by YMEL1 downstream of the integrated stress response (ISR).

It is found in the mitochondrion inner membrane. In terms of biological role, essential component of the TIM23 complex, a complex that mediates the translocation of transit peptide-containing proteins across the mitochondrial inner membrane. The protein is Mitochondrial import inner membrane translocase subunit Tim17-A (Timm17a) of Rattus norvegicus (Rat).